The chain runs to 58 residues: uncharacterized protein (58 aa).

A compositionally biased stretch (low complexity) spans 23-51 (TTTSTSTTTTSTTTSTTTSTTTTTTTTTT). A disordered region spans residues 23-58 (TTTSTSTTTTSTTTSTTTSTTTTTTTTTTKDFNTET).

This is an uncharacterized protein from Dictyostelium discoideum (Social amoeba).